The sequence spans 545 residues: Glucose-6-phosphate isomerase (545 aa).

Residue glutamate 351 is the Proton donor of the active site. Active-site residues include histidine 382 and lysine 510.

It belongs to the GPI family.

The protein resides in the cytoplasm. It carries out the reaction alpha-D-glucose 6-phosphate = beta-D-fructose 6-phosphate. It participates in carbohydrate biosynthesis; gluconeogenesis. Its pathway is carbohydrate degradation; glycolysis; D-glyceraldehyde 3-phosphate and glycerone phosphate from D-glucose: step 2/4. In terms of biological role, catalyzes the reversible isomerization of glucose-6-phosphate to fructose-6-phosphate. In Shewanella denitrificans (strain OS217 / ATCC BAA-1090 / DSM 15013), this protein is Glucose-6-phosphate isomerase.